The chain runs to 652 residues: Type III restriction-modification enzyme StyLTI Mod subunit (652 aa).

Residues D135–Y138 form a binding of S-adenosyl methionine region.

This sequence belongs to the N(4)/N(6)-methyltransferase family. In terms of assembly, homodimer, also forms a functional restriction-competent complex with Res.

The catalysed reaction is a 2'-deoxyadenosine in DNA + S-adenosyl-L-methionine = an N(6)-methyl-2'-deoxyadenosine in DNA + S-adenosyl-L-homocysteine + H(+). Functionally, a beta subtype methylase that binds the system-specific DNA recognition site 5'-CAGAG-3' and methylates A-4 (of only 1 strand as the other does not have an A residue). DNA restriction requires both the Res and Mod subunits. The sequence is that of Type III restriction-modification enzyme StyLTI Mod subunit from Salmonella typhimurium (strain LT2 / SGSC1412 / ATCC 700720).